The sequence spans 264 residues: ATP synthase subunit a (264 aa).

7 helical membrane-spanning segments follow: residues 29 to 49 (TWHI…LWIF), 90 to 110 (IAPL…MDMI), 111 to 131 (PVDW…KVVP), 134 to 154 (DVNI…YYSI), 177 to 197 (IPVN…SLAL), 208 to 228 (LIFI…TLGV), and 235 to 255 (LIFH…LTIV).

It belongs to the ATPase A chain family. F-type ATPases have 2 components, CF(1) - the catalytic core - and CF(0) - the membrane proton channel. CF(1) has five subunits: alpha(3), beta(3), gamma(1), delta(1), epsilon(1). CF(0) has three main subunits: a(1), b(2) and c(9-12). The alpha and beta chains form an alternating ring which encloses part of the gamma chain. CF(1) is attached to CF(0) by a central stalk formed by the gamma and epsilon chains, while a peripheral stalk is formed by the delta and b chains.

It is found in the cell inner membrane. In terms of biological role, key component of the proton channel; it plays a direct role in the translocation of protons across the membrane. This chain is ATP synthase subunit a, found in Shewanella denitrificans (strain OS217 / ATCC BAA-1090 / DSM 15013).